We begin with the raw amino-acid sequence, 467 residues long: UDP-glycosyltransferase 71D1 (467 aa).

The active-site Proton acceptor is His16. His16 lines the an anthocyanidin pocket. The active-site Charge relay is Asp122. Residues Thr144, Gln341, His356, Trp359, Asn360, Ser361, and Glu364 each coordinate UDP-alpha-D-glucose. Ala379 lines the an anthocyanidin pocket. Glu380 and Gln381 together coordinate UDP-alpha-D-glucose.

It belongs to the UDP-glycosyltransferase family.

The catalysed reaction is a flavonol + UDP-alpha-D-glucose = a flavonol 3-O-beta-D-glucoside + UDP + H(+). Functionally, possesses quercetin 3-O-glucosyltransferase activity in vitro. This chain is UDP-glycosyltransferase 71D1 (UGT71D1), found in Arabidopsis thaliana (Mouse-ear cress).